The chain runs to 229 residues: Cytidylate kinase (229 aa).

Glycine 12–threonine 20 contributes to the ATP binding site.

It belongs to the cytidylate kinase family. Type 1 subfamily.

The protein localises to the cytoplasm. The catalysed reaction is CMP + ATP = CDP + ADP. It catalyses the reaction dCMP + ATP = dCDP + ADP. This is Cytidylate kinase from Azotobacter vinelandii (strain DJ / ATCC BAA-1303).